The primary structure comprises 1143 residues: ATP-dependent helicase/deoxyribonuclease subunit B (1143 aa).

The UvrD-like helicase ATP-binding domain occupies 1–274 (MNYMHLGRAG…YGQTVKFQST (274 aa)). 7–14 (GRAGTGKT) contributes to the ATP binding site. Residues 267-565 (QTVKFQSTGL…RFSLVPPSLD (299 aa)) form the UvrD-like helicase C-terminal domain. C782, C1104, C1107, and C1113 together coordinate [4Fe-4S] cluster.

It belongs to the helicase family. AddB/RexB type 1 subfamily. As to quaternary structure, heterodimer of AddA and AddB. The cofactor is Mg(2+). [4Fe-4S] cluster is required as a cofactor.

In terms of biological role, the heterodimer acts as both an ATP-dependent DNA helicase and an ATP-dependent, dual-direction single-stranded exonuclease. Recognizes the chi site generating a DNA molecule suitable for the initiation of homologous recombination. The AddB subunit has 5' -&gt; 3' nuclease activity but not helicase activity. The protein is ATP-dependent helicase/deoxyribonuclease subunit B of Exiguobacterium sibiricum (strain DSM 17290 / CCUG 55495 / CIP 109462 / JCM 13490 / 255-15).